Reading from the N-terminus, the 329-residue chain is MKKGLKTIWHNFIQKREKVKQYRALYEKQIKQYQQKVAKLDPTTKAEEIANLQSEIDVLQRLIKIKNTKDDVVKQDFDKKNVFEIENLNFWYNKDKQVLFDINLKIKRNKITALIGKSGCGKSTFIRCLNKLNDLNENVRWNGKIFFLGKNINSGIINDLTLRTRVGMVFQQLTPFNFSIFENIAYGLRAHGIHNKQAIHEIVEQALKSTALWDEVKDNLHRNANTLSGGQQQRLCIARAIALQPDVLLMDEPTSALDSIATNSIELLIQQLKEKYTIIIVTHSMAQTIRITDETIFFANGRVVEQGTTKQIFTRPKQKETNRYISGRN.

Residues 83–325 (FEIENLNFWY…PKQKETNRYI (243 aa)) form the ABC transporter domain. ATP is bound at residue 116 to 123 (GKSGCGKS).

Belongs to the ABC transporter superfamily. Phosphate importer (TC 3.A.1.7) family. The complex is composed of two ATP-binding proteins (PstB), two transmembrane proteins (PstC and PstA) and a solute-binding protein (PstS).

It is found in the cell membrane. The enzyme catalyses phosphate(out) + ATP + H2O = ADP + 2 phosphate(in) + H(+). In terms of biological role, part of the ABC transporter complex PstSACB involved in phosphate import. Responsible for energy coupling to the transport system. This Mycoplasma pneumoniae (strain ATCC 29342 / M129 / Subtype 1) (Mycoplasmoides pneumoniae) protein is Phosphate import ATP-binding protein PstB.